Here is a 398-residue protein sequence, read N- to C-terminus: Aspartate aminotransferase (398 aa).

Gly36, Trp132, and Asn185 together coordinate L-aspartate. At Lys248 the chain carries N6-(pyridoxal phosphate)lysine. Position 376 (Arg376) interacts with L-aspartate.

The protein belongs to the class-I pyridoxal-phosphate-dependent aminotransferase family. Homodimer. Requires pyridoxal 5'-phosphate as cofactor.

It is found in the cytoplasm. It catalyses the reaction L-aspartate + 2-oxoglutarate = oxaloacetate + L-glutamate. In Pseudomonas aeruginosa (strain ATCC 15692 / DSM 22644 / CIP 104116 / JCM 14847 / LMG 12228 / 1C / PRS 101 / PAO1), this protein is Aspartate aminotransferase (aspC).